The sequence spans 729 residues: Rho GTPase-activating protein 28 (729 aa).

Disordered regions lie at residues 20 to 42 (AQPPNAESRCAPRAAASHPLSRK) and 55 to 105 (SNES…AEVT). Residues 65–75 (SRSNSEASVDS) are compositionally biased toward polar residues. S72 carries the phosphoserine modification. Residues 80–89 (DFWREIESIK) are compositionally biased toward basic and acidic residues. T159 is subject to Phosphothreonine. The interval 176–236 (GVSESPPRDT…SQDKEGSFAV (61 aa)) is disordered. Residues 195–204 (GTKEERELPR) are compositionally biased toward basic and acidic residues. Residues 217 to 226 (SLNSTTLSDA) show a composition bias toward polar residues. Residues 380–577 (VPLTVLLDGD…LMLKYQKILW (198 aa)) form the Rho-GAP domain. Residues 612–631 (TLERETASPKTSKVLQKSPS) are disordered. Residues 619 to 630 (SPKTSKVLQKSP) show a composition bias toward polar residues.

In terms of tissue distribution, expressed in testis. Expressed at moderate level in kidney and ovary, and weakly expressed in spleen and skeletal muscle.

In terms of biological role, GTPase activator for the Rho-type GTPases by converting them to an inactive GDP-bound state. This Homo sapiens (Human) protein is Rho GTPase-activating protein 28 (ARHGAP28).